The chain runs to 303 residues: Putative CRISPR-associated endonuclease Cas1 2 (303 aa).

E149 contacts Mn(2+).

Belongs to the CRISPR-associated endonuclease Cas1 family. As to quaternary structure, homodimer, forms a heterotetramer with a Cas2 homodimer. The cofactor is Mg(2+). Mn(2+) is required as a cofactor.

CRISPR (clustered regularly interspaced short palindromic repeat), is an adaptive immune system that provides protection against mobile genetic elements (viruses, transposable elements and conjugative plasmids). CRISPR clusters contain sequences complementary to antecedent mobile elements and target invading nucleic acids. CRISPR clusters are transcribed and processed into CRISPR RNA (crRNA). Acts as a dsDNA endonuclease. Involved in the integration of spacer DNA into the CRISPR cassette. The chain is Putative CRISPR-associated endonuclease Cas1 2 from Methanospirillum hungatei JF-1 (strain ATCC 27890 / DSM 864 / NBRC 100397 / JF-1).